The following is a 350-amino-acid chain: Glycolate oxidase subunit GlcE (350 aa).

The FAD-binding PCMH-type domain maps to 1-173; the sequence is MLRECDYSQA…TEISMKVLPR (173 aa).

In terms of assembly, the glycolate oxidase likely consists of three subunits, GlcD, GlcE and GlcF. It depends on FAD as a cofactor.

It is found in the cell inner membrane. It carries out the reaction glycolate + A = glyoxylate + AH2. It catalyses the reaction (R)-lactate + A = pyruvate + AH2. With respect to regulation, in vitro the glycolate oxidase activity is inhibited by the sulfhydryl inhibitors CuSO4 and PCMB, by KCN, but not by the metal complexing agent EDTA. Functionally, component of a complex that catalyzes the oxidation of glycolate to glyoxylate. Is required for E.coli to grow on glycolate as a sole source of carbon. Is also able to oxidize D-lactate ((R)-lactate) with a similar rate. Does not link directly to O(2), and 2,6-dichloroindophenol (DCIP) and phenazine methosulfate (PMS) can act as artificial electron acceptors in vitro, but the physiological molecule that functions as a primary electron acceptor during glycolate oxidation is unknown. The polypeptide is Glycolate oxidase subunit GlcE (Escherichia coli (strain K12)).